A 447-amino-acid chain; its full sequence is Signal recognition particle 54 kDa protein (447 aa).

Residues 108-115, 188-192, and 246-249 contribute to the GTP site; these read GLYGMGKT, DTAGR, and TKLD.

It belongs to the GTP-binding SRP family. SRP54 subfamily. As to quaternary structure, part of the signal recognition particle protein translocation system, which is composed of SRP and FtsY. Archaeal SRP consists of a 7S RNA molecule of 300 nucleotides and two protein subunits: SRP54 and SRP19.

The protein resides in the cytoplasm. It catalyses the reaction GTP + H2O = GDP + phosphate + H(+). Involved in targeting and insertion of nascent membrane proteins into the cytoplasmic membrane. Binds to the hydrophobic signal sequence of the ribosome-nascent chain (RNC) as it emerges from the ribosomes. The SRP-RNC complex is then targeted to the cytoplasmic membrane where it interacts with the SRP receptor FtsY. The chain is Signal recognition particle 54 kDa protein from Methanopyrus kandleri (strain AV19 / DSM 6324 / JCM 9639 / NBRC 100938).